The primary structure comprises 156 residues: MPRKGNVPKRDVLPDPIYNDKVVAKLINNIMIDGKKSIAQKICYGAFDIIREKTGKDPLEVFEQALNNVMPVLEVKPRRVGGATYQVPVEVRPERRQALALRWLVVYARERSERTMKERLAAEIIDATNNMGGAYKKKEDTHKMAEANKAFAHYRW.

Belongs to the universal ribosomal protein uS7 family. In terms of assembly, part of the 30S ribosomal subunit. Contacts proteins S9 and S11.

Functionally, one of the primary rRNA binding proteins, it binds directly to 16S rRNA where it nucleates assembly of the head domain of the 30S subunit. Is located at the subunit interface close to the decoding center, probably blocks exit of the E-site tRNA. The sequence is that of Small ribosomal subunit protein uS7 from Acetivibrio thermocellus (strain ATCC 27405 / DSM 1237 / JCM 9322 / NBRC 103400 / NCIMB 10682 / NRRL B-4536 / VPI 7372) (Clostridium thermocellum).